The chain runs to 377 residues: Stimulator of interferon genes protein 7 (377 aa).

4 helical membrane-spanning segments follow: residues 30-50 (TAAITSAIIGVSSGAMLFLAV), 57-77 (THFLVFTAALLTLSFAFGELL), 106-126 (FTFDHGGCISLTAMFSALILC), and 141-161 (FAILFSVNCLVVPQLLFLVGL).

Belongs to the STING family.

It localises to the membrane. Facilitator of innate immune signaling that acts as a sensor of second messenger signals produced by cyclic GMP-AMP synthase-like receptors (cGLRs) and promotes the production of type I interferon. Innate immune response is triggered in response to nucleotides from viruses and bacteria delivered to the cytoplasm. Acts by binding cyclic dinucleotides: recognizes and binds a large variety of 2'-3'- and 3'-3' linked cyclic dinucleotides (2'-3'-cGAMP, 3'-3'-cGAMP, 2',3'-cUAMP, 3',3'-cUAMP and/or 3',3'-c-di-GMP) second messengers produced by cGLRs in response to nucleotides in the cytosol, such as double-stranded RNA (dsRNA). Upon binding to cyclic dinucleotides, oligomerizes and promotes the recruitment and subsequent activation of the transcription factor IRF3 to induce expression of type I interferon. The protein is Stimulator of interferon genes protein 7 of Stylophora pistillata (Smooth cauliflower coral).